A 192-amino-acid chain; its full sequence is Ion-translocating oxidoreductase complex subunit B (192 aa).

A hydrophobic region spans residues 1–26 (MNAIWIAVAAVSLLGLAFGAILGYAS). The region spanning 32-91 (EDDPVVEKIDEILPQSQCGQCGYPGCRPYAEAISCNGEKINRCAPGGEAVMLKIAELLNV) is the 4Fe-4S domain. [4Fe-4S] cluster is bound by residues Cys-49, Cys-52, Cys-57, Cys-74, Cys-117, Cys-120, Cys-123, Cys-127, Cys-147, Cys-150, Cys-153, and Cys-157. 4Fe-4S ferredoxin-type domains lie at 108–137 (MVAV…GATR) and 138–167 (VMHT…LQPV).

The protein belongs to the 4Fe4S bacterial-type ferredoxin family. RnfB subfamily. In terms of assembly, the complex is composed of six subunits: RsxA, RsxB, RsxC, RsxD, RsxE and RsxG. Requires [4Fe-4S] cluster as cofactor.

It is found in the cell inner membrane. Functionally, part of a membrane-bound complex that couples electron transfer with translocation of ions across the membrane. Required to maintain the reduced state of SoxR. The sequence is that of Ion-translocating oxidoreductase complex subunit B from Shigella boydii serotype 4 (strain Sb227).